The sequence spans 585 residues: Pentatricopeptide repeat-containing protein At4g21170 (585 aa).

12 PPR repeats span residues 152-186 (LSVS…RLSP), 187-221 (SQSA…GIVS), 222-247 (DELT…KLME), 252-286 (SCKI…KLEL), 287-321 (SFCS…KFVT), 324-358 (DSAV…ETVR), 360-394 (WDST…GITV), 396-431 (DESC…GFVP), 432-466 (CTHK…EVYF), 467-501 (DSFA…KGSL), 502-534 (DVNA…MKEI), and 538-572 (NSKS…GLKP).

Belongs to the PPR family. P subfamily.

In Arabidopsis thaliana (Mouse-ear cress), this protein is Pentatricopeptide repeat-containing protein At4g21170.